A 255-amino-acid chain; its full sequence is Putative oxidoreductase YtkK (255 aa).

7–14 (TAGSKGLG) provides a ligand contact to NAD(+).

This sequence belongs to the short-chain dehydrogenases/reductases (SDR) family.

This Bacillus subtilis (strain 168) protein is Putative oxidoreductase YtkK (ytkK).